A 371-amino-acid polypeptide reads, in one-letter code: Queuine tRNA-ribosyltransferase (371 aa).

The active-site Proton acceptor is Asp-90. Residues 90–94 (DSGGF), Asp-144, Gln-188, and Gly-215 each bind substrate. The tract at residues 246 to 252 (GVGTPED) is RNA binding. The active-site Nucleophile is the Asp-265. Residues 270–274 (TRNAR) form an RNA binding; important for wobble base 34 recognition region. 4 residues coordinate Zn(2+): Cys-303, Cys-305, Cys-308, and His-334.

It belongs to the queuine tRNA-ribosyltransferase family. Homodimer. Within each dimer, one monomer is responsible for RNA recognition and catalysis, while the other monomer binds to the replacement base PreQ1. It depends on Zn(2+) as a cofactor.

It catalyses the reaction 7-aminomethyl-7-carbaguanine + guanosine(34) in tRNA = 7-aminomethyl-7-carbaguanosine(34) in tRNA + guanine. It functions in the pathway tRNA modification; tRNA-queuosine biosynthesis. Catalyzes the base-exchange of a guanine (G) residue with the queuine precursor 7-aminomethyl-7-deazaguanine (PreQ1) at position 34 (anticodon wobble position) in tRNAs with GU(N) anticodons (tRNA-Asp, -Asn, -His and -Tyr). Catalysis occurs through a double-displacement mechanism. The nucleophile active site attacks the C1' of nucleotide 34 to detach the guanine base from the RNA, forming a covalent enzyme-RNA intermediate. The proton acceptor active site deprotonates the incoming PreQ1, allowing a nucleophilic attack on the C1' of the ribose to form the product. After dissociation, two additional enzymatic reactions on the tRNA convert PreQ1 to queuine (Q), resulting in the hypermodified nucleoside queuosine (7-(((4,5-cis-dihydroxy-2-cyclopenten-1-yl)amino)methyl)-7-deazaguanosine). This chain is Queuine tRNA-ribosyltransferase, found in Neisseria meningitidis serogroup C (strain 053442).